A 66-amino-acid chain; its full sequence is Surface composition regulator (66 aa).

This sequence belongs to the GlgS family.

Its function is as follows. Major determinant of cell surface composition. Negatively regulates motility, adhesion and synthesis of biofilm exopolysaccharides. This Escherichia coli O127:H6 (strain E2348/69 / EPEC) protein is Surface composition regulator.